The primary structure comprises 60 residues: Conotoxin PnMRCL-022 (60 aa).

Positions 1–22 are cleaved as a signal peptide; that stretch reads MRCLPVFVILLLLIASTPSVNA. The propeptide occupies 23 to 45; that stretch reads RPKTKDLASFHDNAKRTQHIFWS.

Belongs to the conotoxin T superfamily. In terms of processing, contains 2 disulfide bonds that can be either 'C1-C3, C2-C4' or 'C1-C4, C2-C3', since these disulfide connectivities have been observed for conotoxins with cysteine framework V (for examples, see AC P0DQQ7 and AC P81755). In terms of tissue distribution, expressed by the venom duct.

The protein resides in the secreted. The sequence is that of Conotoxin PnMRCL-022 from Conus pennaceus (Feathered cone).